The sequence spans 122 residues: Small ribosomal subunit protein uS13 (122 aa).

The segment at 93 to 122 is disordered; sequence RLSLPVRGQRTKTNSRTRKGKRKTVAGKKK. A compositionally biased stretch (basic residues) spans 101-122; it reads QRTKTNSRTRKGKRKTVAGKKK.

It belongs to the universal ribosomal protein uS13 family. Part of the 30S ribosomal subunit. Forms a loose heterodimer with protein S19. Forms two bridges to the 50S subunit in the 70S ribosome.

In terms of biological role, located at the top of the head of the 30S subunit, it contacts several helices of the 16S rRNA. In the 70S ribosome it contacts the 23S rRNA (bridge B1a) and protein L5 of the 50S subunit (bridge B1b), connecting the 2 subunits; these bridges are implicated in subunit movement. Contacts the tRNAs in the A and P-sites. The sequence is that of Small ribosomal subunit protein uS13 from Chlamydia caviae (strain ATCC VR-813 / DSM 19441 / 03DC25 / GPIC) (Chlamydophila caviae).